The primary structure comprises 423 residues: MTELIELKEIEERVILVAVSTGDEEDAKGSLDELEELVKTAGAVAVDKVIQNRERIHPGTYLGKGKIEEIKDRIWELDATGIVCDDELSPAQLRNLEGALDTKVMDRTMVILDIFASRAVTREGKIQVELAQLRYRSARLVGLRSSLSRLGGGIGTRGPGEKKLEMDRRLIHDRIGMLKAELEDVKRHREVVRQQRDKNHVPAAAIVGYTNAGKSTLLNRLTDAGILAEDKLFATLDPTTRNLSLPGGQQILLTDTVGFIRKLPHHLIEAFKSTLEEAKYSDIILHVVDCSNPQMDMQMYVVYETLRELGICDKIMITVFNKIDAADAGVILRDVSSDHQVRISAKTGEGLDELINLLETILRNQKVYLERIYSYKEAGKIQLIRKYGQLLKEEYQEDGIFVNAYVPSELFASLADNADAFNE.

The 165-residue stretch at 202–366 (PAAAIVGYTN…LLETILRNQK (165 aa)) folds into the Hflx-type G domain. GTP contacts are provided by residues 208-215 (GYTNAGKS), 233-237 (FATLD), 255-258 (DTVG), 321-324 (NKID), and 344-346 (SAK). 2 residues coordinate Mg(2+): serine 215 and threonine 235.

Belongs to the TRAFAC class OBG-HflX-like GTPase superfamily. HflX GTPase family. As to quaternary structure, monomer. Associates with the 50S ribosomal subunit. The cofactor is Mg(2+).

Its subcellular location is the cytoplasm. Its function is as follows. GTPase that associates with the 50S ribosomal subunit and may have a role during protein synthesis or ribosome biogenesis. The sequence is that of GTPase HflX from Lacrimispora saccharolytica (strain ATCC 35040 / DSM 2544 / NRCC 2533 / WM1) (Clostridium saccharolyticum).